A 748-amino-acid chain; its full sequence is Translation factor GUF1 homolog 2, mitochondrial (748 aa).

A mitochondrion-targeting transit peptide spans 1–29; that stretch reads MRVGCCLLLKPLRQRLCTASISSRHIMRW. The tr-type G domain maps to 94–276; that stretch reads SHIRNVAVVA…AIIERVPPPT (183 aa). GTP-binding positions include 103-110, 167-171, and 221-224; these read AHVDHGKT, DTPGH, and TKMD.

The protein belongs to the TRAFAC class translation factor GTPase superfamily. Classic translation factor GTPase family. LepA subfamily.

The protein resides in the mitochondrion inner membrane. The catalysed reaction is GTP + H2O = GDP + phosphate + H(+). Its function is as follows. Promotes mitochondrial protein synthesis. May act as a fidelity factor of the translation reaction, by catalyzing a one-codon backward translocation of tRNAs on improperly translocated ribosomes. Binds to mitochondrial ribosomes in a GTP-dependent manner. The protein is Translation factor GUF1 homolog 2, mitochondrial of Trypanosoma cruzi (strain CL Brener).